The following is a 235-amino-acid chain: Sugar fermentation stimulation protein homolog (235 aa).

The protein belongs to the SfsA family.

This is Sugar fermentation stimulation protein homolog from Allorhizobium ampelinum (strain ATCC BAA-846 / DSM 112012 / S4) (Agrobacterium vitis (strain S4)).